Consider the following 483-residue polypeptide: 5-hydroxytryptamine receptor 3A (483 aa).

Residues 1 to 23 (MPLCIPQVLLALFLSVLIAQGEG) form the signal peptide. The Extracellular portion of the chain corresponds to 24 to 246 (SRRRATQAHS…MKFYVVIRRR (223 aa)). N109, N175, and N191 each carry an N-linked (GlcNAc...) asparagine glycan. A disulfide bridge connects residues C162 and C176. A helical transmembrane segment spans residues 247–273 (PLFYAVSLLLPSIFLMVVDIVGFCLPP). At 274-278 (DSGER) the chain is on the cytoplasmic side. The chain crosses the membrane as a helical span at residues 279–297 (VSFKITLLLGYSVFLIIVS). Residues 298 to 307 (DTLPATAIGT) lie on the Extracellular side of the membrane. A helical membrane pass occupies residues 308–326 (PLIGVYFVVCMALLVISLA). Residues 327-460 (ETIFIVQLVH…GYVLDRLLFR (134 aa)) lie on the Cytoplasmic side of the membrane. The segment at 393 to 414 (VGSPQDLEKTSRSRDSPLPPPR) is disordered. Over residues 398-407 (DLEKTSRSRD) the composition is skewed to basic and acidic residues. An HA-stretch; determines single-channel conductance in 5-HT3 receptors region spans residues 419 to 455 (AVRGLLQELSSIRHSLEKRDEMREVARDWLRVGYVLD). The helical transmembrane segment at 461-480 (IYLLAVLAYSITLVTLWSIW) threads the bilayer. Residues 481–483 (HYS) are Extracellular-facing.

Belongs to the ligand-gated ion channel (TC 1.A.9) family. 5-hydroxytryptamine receptor (TC 1.A.9.2) subfamily. HTR3A sub-subfamily. Forms homopentameric as well as heteropentameric serotonin-activated cation-selective channel complexes with HTR3B or HTR3C or HTR3D or HTR3E. The homomeric complex is functional but exhibits low conductance with modified voltage dependence, and decreased agonist and antagonist affinity. Heteropentameric complexes display properties which resemble that of neuronal serotonin-activated channels in vivo. Interacts with RIC3. Expressed in central and peripheral neurons.

Its subcellular location is the postsynaptic cell membrane. The protein localises to the cell membrane. The catalysed reaction is Na(+)(in) = Na(+)(out). The enzyme catalyses K(+)(in) = K(+)(out). It catalyses the reaction Ca(2+)(in) = Ca(2+)(out). It carries out the reaction Mg(2+)(in) = Mg(2+)(out). In terms of biological role, forms serotonin (5-hydroxytryptamine/5-HT3)-activated cation-selective channel complexes, which when activated cause fast, depolarizing responses in neurons. The sequence is that of 5-hydroxytryptamine receptor 3A from Rattus norvegicus (Rat).